We begin with the raw amino-acid sequence, 494 residues long: MPFAHEQLNLVASEQLSKTETIKLRNQHIGQACQLFYRSDPLKIVRGQGQYMFDEEGTRYLDCINNVAHVGHCHPEVVRAGALQMATISTNNRFLHDELVQCARTLTSKMPEPLSVCFFVNSGSEANDLALRLARNFTKRQDVITLDHAYHGHLQSVMEVSPYKFNQPGGEAKPDYVHVAPCPDVYGGKFTDKMYPDADMGALYAQPIEEICQKQLAKGQGVAAFIAESLQSCGGQILPPAGYFQAVYDAVRSAGGVCIADEVQVGFGRVGSHYWAFETQNVIPDIVCVAKPMGNGHPVGAVVTTPEIAQAFHATGVAYFNTYGGNPVSCAIANAVMRVIEEEGLQQKALVLGDYLLEECNRLKQEFECIGDVRGAGLFVGIELVQDRKERIPDKKAAHWVVNRMKQLHRVLVSSDGPNDNVIKLKPPMCFNRENADEFLLGFRECLTAVMQERLASATSAAMAATSGVIATATETLANKTKLFERQDRLIKSV.

Residue Lys291 is modified to N6-(pyridoxal phosphate)lysine.

This sequence belongs to the class-III pyridoxal-phosphate-dependent aminotransferase family. Pyridoxal 5'-phosphate is required as a cofactor.

The chain is Alanine--glyoxylate aminotransferase 2-like from Drosophila melanogaster (Fruit fly).